The chain runs to 269 residues: 4-hydroxy-tetrahydrodipicolinate reductase (269 aa).

NAD(+) is bound by residues G8 to M13 and E34. NADP(+) is bound at residue R35. NAD(+) is bound by residues G98–T100 and A122–Y125. The Proton donor/acceptor role is filled by H155. (S)-2,3,4,5-tetrahydrodipicolinate is bound at residue H156. K159 (proton donor) is an active-site residue. G165–T166 serves as a coordination point for (S)-2,3,4,5-tetrahydrodipicolinate.

The protein belongs to the DapB family.

The protein resides in the cytoplasm. It carries out the reaction (S)-2,3,4,5-tetrahydrodipicolinate + NAD(+) + H2O = (2S,4S)-4-hydroxy-2,3,4,5-tetrahydrodipicolinate + NADH + H(+). The enzyme catalyses (S)-2,3,4,5-tetrahydrodipicolinate + NADP(+) + H2O = (2S,4S)-4-hydroxy-2,3,4,5-tetrahydrodipicolinate + NADPH + H(+). Its pathway is amino-acid biosynthesis; L-lysine biosynthesis via DAP pathway; (S)-tetrahydrodipicolinate from L-aspartate: step 4/4. Catalyzes the conversion of 4-hydroxy-tetrahydrodipicolinate (HTPA) to tetrahydrodipicolinate. The protein is 4-hydroxy-tetrahydrodipicolinate reductase of Vibrio parahaemolyticus serotype O3:K6 (strain RIMD 2210633).